A 60-amino-acid polypeptide reads, in one-letter code: uncharacterized protein (60 aa).

The protein resides in the host cytoplasm. This is an uncharacterized protein from Escherichia phage Mu (Bacteriophage Mu).